Consider the following 82-residue polypeptide: Acyl carrier protein (82 aa).

One can recognise a Carrier domain in the interval serine 3–glutamine 81. Position 41 is an O-(pantetheine 4'-phosphoryl)serine (serine 41).

This sequence belongs to the acyl carrier protein (ACP) family. Post-translationally, 4'-phosphopantetheine is transferred from CoA to a specific serine of apo-ACP by AcpS. This modification is essential for activity because fatty acids are bound in thioester linkage to the sulfhydryl of the prosthetic group.

It localises to the cytoplasm. It functions in the pathway lipid metabolism; fatty acid biosynthesis. Carrier of the growing fatty acid chain in fatty acid biosynthesis. The sequence is that of Acyl carrier protein from Beutenbergia cavernae (strain ATCC BAA-8 / DSM 12333 / CCUG 43141 / JCM 11478 / NBRC 16432 / NCIMB 13614 / HKI 0122).